We begin with the raw amino-acid sequence, 1502 residues long: Leucine-rich repeat-containing protein 9 (1502 aa).

LRR repeat units follow at residues 53–79 (FPNL…HFLK), 97–119 (CADL…LENL), 120–141 (LKLE…LDMM), 142–164 (QNLK…LDPN), 166–188 (QLER…NLAR), 224–247 (LQRL…TVVK), 296–320 (EHEL…KFHE), 699–721 (YSQI…ISRL), 722–744 (NGLR…SYLT), 746–764 (LEYL…GFKG), 765–790 (LGKL…ILRK), 792–814 (AIQL…VLKD), 822–849 (LTHL…RITQ), 894–916 (YTKI…LEKL), 917–938 (VNLR…LEHC), 939–960 (VNLE…LSKL), 961–983 (TKLR…VIES), 985–1009 (SHLH…GYKL), 1011–1030 (ELYL…SLKG), 1031–1053 (LNNL…NYRL), 1100–1123 (FTEL…PADH), 1124–1146 (FRNV…LIFL), 1147–1170 (PNIK…KSQS), 1209–1232 (MQSL…QLGR), 1234–1255 (RNLK…LENL), 1256–1278 (QFLR…SFAK), 1280–1301 (NSLV…LPPL), 1302–1325 (LKLR…KLEV), and 1327–1351 (PALV…LLVV). The disordered stretch occupies residues 317-342 (KFHENNCDTEESNSQQSSERRKNNSD). A compositionally biased stretch (polar residues) spans 1479–1496 (TQQSGQARSQQKHPFNQE). Positions 1479–1502 (TQQSGQARSQQKHPFNQENEGRCV) are disordered.

The sequence is that of Leucine-rich repeat-containing protein 9 (lrrc9) from Xenopus tropicalis (Western clawed frog).